Consider the following 1072-residue polypeptide: LRR receptor-like serine/threonine-protein kinase RGI5 (1072 aa).

Residues 1-21 (MERERSNFFFLFLFCSWVSMA) form the signal peptide. Topologically, residues 22–706 (QPTLSLSSDG…NGVKSPKIVA (685 aa)) are extracellular. Cysteines 56 and 63 form a disulfide. LRR repeat units lie at residues 66 to 89 (DNRVISVSIPDTFLNLSSIPDLSS), 90 to 113 (LSSLQFLNLSSTNLSGPIPPSFGK), 114 to 138 (LTHLRLLDLSSNSLSGPIPSELGRL), 140 to 162 (TLQFLILNANKLSGSIPSQISNL), 164 to 185 (ALQVLCLQDNLLNGSIPSSFGS), 187 to 211 (VSLQQFRLGGNTNLGGPIPAQLGFL), 212 to 234 (KNLTTLGFAASGLSGSIPSTFGN), 235 to 259 (LVNLQTLALYDTEISGTIPPQLGLC), 260 to 283 (SELRNLYLHMNKLTGSIPKELGKL), 285 to 307 (KITSLLLWGNSLSGVIPPEISNC), 308 to 331 (SSLVVFDVSANDLTGDIPGDLGKL), 332 to 355 (VWLEQLQLSDNMFTGQIPWELSNC), 356 to 379 (SSLIALQLDKNKLSGSIPSQIGNL), 381 to 402 (SLQSFFLWENSISGTIPSSFGN), 403 to 427 (CTDLVALDLSRNKLTGRIPEELFSL), 429 to 451 (RLSKLLLLGNSLSGGLPKSVAKC), 452 to 475 (QSLVRLRVGENQLSGQIPKEIGEL), 477 to 499 (NLVFLDLYMNHFSGGLPYEISNI), 500 to 523 (TVLELLDVHNNYITGDIPAQLGNL), 524 to 546 (VNLEQLDLSRNSFTGNIPLSFGN), 548 to 571 (SYLNKLILNNNLLTGQIPKSIKNL), 572 to 595 (QKLTLLDLSYNSLSGEIPQELGQV), 597 to 619 (SLTINLDLSYNTFTGNIPETFSD), 620 to 642 (LTQLQSLDLSSNSLHGDIKVLGS), and 643 to 667 (LTSLASLNISCNNFSGPIPSTPFFK). N-linked (GlcNAc...) asparagine glycans are attached at residues N80, N97, and N102. The short motif at 171–172 (QD) is the Small peptide recognition element. N176 carries an N-linked (GlcNAc...) asparagine glycan. A Small peptide recognition motif is present at residues 193–196 (RLGG). N213 carries an N-linked (GlcNAc...) asparagine glycan. 3 consecutive short sequence motifs (small peptide recognition) follow at residues 216 to 221 (TLGFAA), Y244, and 266 to 268 (YLH). N306 carries N-linked (GlcNAc...) asparagine glycosylation. 2 consecutive short sequence motifs (small peptide recognition) follow at residues 314–317 (DVSA) and 336–338 (QLQ). An N-linked (GlcNAc...) asparagine glycan is attached at N354. Positions 384 to 388 (SFFLW) match the Small peptide recognition motif. A glycan (N-linked (GlcNAc...) asparagine) is linked at N402. Short sequence motifs (small peptide recognition) lie at residues 410-413 (DLSR), 432-436 (KLLLL), and 456-458 (RLR). N498 is a glycosylation site (N-linked (GlcNAc...) asparagine). N546 is a glycosylation site (N-linked (GlcNAc...) asparagine). N650 and N655 each carry an N-linked (GlcNAc...) asparagine glycan. A helical membrane pass occupies residues 707–727 (LTAVILASITIAILAAWLLIL). Residues 728–1072 (RNNHLYKTSQ…SQPLIKPSSS (345 aa)) are Cytoplasmic-facing. T764 is subject to Phosphothreonine. The region spanning 772-1067 (LTDENVIGKG…EWGKTSQPLI (296 aa)) is the Protein kinase domain. ATP is bound by residues 778 to 786 (IGKGCSGIV) and K800. 2 positions are modified to phosphotyrosine: Y851 and Y887. D900 (proton acceptor) is an active-site residue. S936 carries the phosphoserine modification. Residues Y944 and Y951 each carry the phosphotyrosine modification. The residue at position 952 (T952) is a Phosphothreonine.

This sequence belongs to the protein kinase superfamily. Ser/Thr protein kinase family. In terms of assembly, binds to RGF1; this interaction triggers the formation of heterodimers with SERK1. In terms of processing, phosphorylated and ubiquitinated upon interaction with RGF1, thus leading to activation a subsequent degradation. Post-translationally, autophosphorylated. As to expression, expressed in roots and hypocotyls.

Its subcellular location is the membrane. The enzyme catalyses L-seryl-[protein] + ATP = O-phospho-L-seryl-[protein] + ADP + H(+). The catalysed reaction is L-threonyl-[protein] + ATP = O-phospho-L-threonyl-[protein] + ADP + H(+). Together with RGI1, RGI2, RGI3 and RGI4, acts as a receptor of RGF1, a peptide hormone that maintains the postembryonic root stem cell niche by regulating the expression levels and patterns of the transcription factor PLETHORA (PLT). Links RGF1 signal with its downstream components. In Arabidopsis thaliana (Mouse-ear cress), this protein is LRR receptor-like serine/threonine-protein kinase RGI5.